A 199-amino-acid polypeptide reads, in one-letter code: Probable GTP-binding protein EngB (199 aa).

Residues 24 to 197 (EGYEVIFAGR…GARLNTFFGY (174 aa)) enclose the EngB-type G domain. GTP contacts are provided by residues 32-39 (GRSNAGKS), 59-63 (GKTQH), 77-80 (DLPG), 144-147 (TKSD), and 176-178 (FSS). Ser39 and Thr61 together coordinate Mg(2+).

Belongs to the TRAFAC class TrmE-Era-EngA-EngB-Septin-like GTPase superfamily. EngB GTPase family. Requires Mg(2+) as cofactor.

In terms of biological role, necessary for normal cell division and for the maintenance of normal septation. The chain is Probable GTP-binding protein EngB from Ruthia magnifica subsp. Calyptogena magnifica.